Here is a 904-residue protein sequence, read N- to C-terminus: Envelope glycoprotein B (904 aa).

A signal peptide spans 1 to 30 (MRQGAPARGRRWFVVWALLGLTLGVLVASA). Over residues 31-52 (APSSPGTPGVAAATQAANGGPA) the composition is skewed to low complexity. Residues 31–88 (APSSPGTPGVAAATQAANGGPATPAPPAPGAPPTGDPKPKKNRKPKPPKPPRPAGDNA) form a disordered region. At 31–774 (APSSPGTPGV…SGVSSFMSNP (744 aa)) the chain is on the virion surface side. Residues 53–66 (TPAPPAPGAPPTGD) show a composition bias toward pro residues. Residues 70–79 (KKNRKPKPPK) are compositionally biased toward basic residues. N87 and N141 each carry an N-linked (GlcNAc...) asparagine; by host glycan. Cystine bridges form between C116–C573, C133–C529, C207–C271, C364–C412, and C596–C633. 2 involved in fusion and/or binding to host membrane regions span residues 173-179 (VWFGHRY) and 258-265 (RVEAFHRY). N-linked (GlcNAc...) asparagine; by host glycosylation is found at N398 and N430. The segment at 470–492 (REQSRKPPNPTPPPPGASANASV) is disordered. The span at 476–485 (PPNPTPPPPG) shows a compositional bias: pro residues. The N-linked (GlcNAc...) asparagine; by host glycan is linked to N489. N674 is a glycosylation site (N-linked (GlcNAc...) asparagine; by host). Residues 719–772 (IDTVIHADANAAMFAGLGAFFEGMGDLGRAVGKVVMGIVGGVVSAVSGVSSFMS) are hydrophobic membrane proximal region. The chain crosses the membrane as a helical span at residues 775-795 (FGALAVGLLVLAGLAAAFFAF). Over 796 to 904 (RYVMRLQSNP…KDGDADEDDL (109 aa)) the chain is Intravirion. The Golgi targeting signature appears at 849–852 (YMAL). The segment at 883–904 (KRRNTNYTQVPNKDGDADEDDL) is disordered. The Internalization motif signature appears at 889-892 (YTQV).

This sequence belongs to the herpesviridae glycoprotein B family. In terms of assembly, homotrimer; disulfide-linked. Interacts with host receptor MYH9/NMMHC-IIA. Interacts with host receptor MYH10/NMMHC-IIB. Binds to heparan sulfate proteoglycans. Interacts with gH/gL heterodimer. Interacts with host DEFA1, DEFA2 and DEFA3; these interactions inhibit viral infection. Post-translationally, the cytoplasmic tail is phosphorylated by the viral kinase US3. Phosphorylation may be linked to a down-regulation of gB expression on cell surface. In terms of processing, ubiquitinated.

The protein localises to the virion membrane. It is found in the host cell membrane. Its subcellular location is the host endosome membrane. The protein resides in the host Golgi apparatus membrane. In terms of biological role, envelope glycoprotein that forms spikes at the surface of virion envelope and binds to the host cell entry receptors MYH9/NMMHC-IIA and MYH10/NMMHC-IIB, promoting the virus entry into host cells. Essential for the initial attachment to heparan sulfate moieties of the host cell surface proteoglycans. Involved in fusion of viral and cellular membranes leading to virus entry into the host cell: following initial binding to its host cell entry receptors, membrane fusion is mediated by the fusion machinery composed at least of gB and the heterodimer gH/gL. May be involved in the fusion between the virion envelope and the outer nuclear membrane during virion egress. Also plays a role, together with gK, in virus-induced cell-to-cell fusion (syncytia formation). The chain is Envelope glycoprotein B from Homo sapiens (Human).